Here is a 389-residue protein sequence, read N- to C-terminus: Na(+)/H(+) antiporter NhaA (389 aa).

11 helical membrane-spanning segments follow: residues 14–34, 59–79, 95–115, 124–144, 154–174, 177–197, 213–233, 257–277, 292–312, 328–348, and 363–383; these read AGGI…NSPL, LILW…GLEV, SLPT…YLLF, AGWA…MALL, VFLL…IALF, TDLS…LVGL, LILW…GVII, PWST…VYVG, IALG…YIAV, IAPV…IASL, and LGTL…LSKV.

The protein belongs to the NhaA Na(+)/H(+) (TC 2.A.33) antiporter family.

It localises to the cell inner membrane. The catalysed reaction is Na(+)(in) + 2 H(+)(out) = Na(+)(out) + 2 H(+)(in). Functionally, na(+)/H(+) antiporter that extrudes sodium in exchange for external protons. This Shewanella baltica (strain OS155 / ATCC BAA-1091) protein is Na(+)/H(+) antiporter NhaA.